Here is a 928-residue protein sequence, read N- to C-terminus: MVEQDNGFLQKLLKTQYDAVFHLKDENGIEIYPIFNVLPPKKEYPDYYIIIRNPISLNTLKKRLPHYTSPQDFVNDFAQIPWNAMTYNAKDSVIYKYAILLESFIKGKIVHNIRKHYPEVTYPSLGRIPEIFAESMQPSDLSSNPINTQENDEKAGLNPEMKMAFAKLDSSITERKPTNQDYRMQQKNSPAFPTHSASITPQPLASPTPVVNYANITSAHPKTHVRRGRPPVIDLPYVLRIKNILKMMRREVDQNNKTLTLCFEKLPDRNEEPTYYSVITDPICLMDIRKKVKSRKYRNFHTFEEDFQLMLTNFKLYYSQDQSNIIRAQLLEKNFNRLVRIELSKPDEDYLPEGELRYPLDDVEINDEKYQIGDWVLLHNPNDINKPIVGQIFRLWSTTDGNKWLNACWYFRPEQTVHRVDRLFYKNEVMKTGQYRDHPIQDIKGKCYVIHFTRFQRGDPSTKVNGPQFVCEFRYNESDKVFNKIRTWKACLPEELRDQDEPTIPVNGRKFFKYPSPIADLLPANATLNDKVPEPTEGAPTAPPLVGAVYLGPKLERDDLGEYSTSDDCPRYIIRPNDPPEEGKIDYETGTIITDTLTTSSMPRVNSSSTIRLPTLKQTKSIPSSNFRSSSNTPLLHQNFNQTSNFLKLENMNNSSHNLLSHPSVPKFQSPSLLEQSSRSKYHSAKKQTQLSSTAPKKPASKSFTLSSMINTLTAHTSKYNFNHIVIEAPGAFVVPVPMEKNIRTIQSTERFSRSNLKNAQNLGNTAINDINTANEQIIWFKGPGVKITERVIDSGNDLVRVPLNRWFCKNKRRKLDYEDIEEDVMEPPNDFSEDMIANIFNPPPSLNLDMDLNLSPSSNNSSNFMDLSTIASGDNDGKECDTAEESEDENEDTEDEHEIEDIPTTSAFGLNSSAEYLAFRLREFNKL.

Bromo domains lie at 4 to 112 (QDNG…IVHN) and 240 to 342 (RIKN…VRIE). Positions 368–486 (EKYQIGDWVL…ESDKVFNKIR (119 aa)) constitute a BAH domain. 4 disordered regions span residues 558-586 (DDLG…GKID), 598-635 (TTSS…NTPL), 657-701 (HNLL…KPAS), and 871-908 (IASG…TTSA). Over residues 600 to 620 (SSMPRVNSSSTIRLPTLKQTK) the composition is skewed to polar residues. A compositionally biased stretch (low complexity) spans 621–631 (SIPSSNFRSSS). Positions 667–679 (KFQSPSLLEQSSR) are enriched in polar residues. Ser-670 is modified (phosphoserine). Residues 692 to 701 (SSTAPKKPAS) are compositionally biased toward low complexity. The span at 883–902 (TAEESEDENEDTEDEHEIED) shows a compositional bias: acidic residues.

It belongs to the RSC1 family. Component of the two forms of the RSC complex composed of at least either RSC1 or RSC2, and ARP7, ARP9, LDB7, NPL6, RSC3, RSC30, RSC4, RSC58, RSC6, RSC8, RSC9, SFH1, STH1, HTL1 and probably RTT102. The complexes interact with histone and histone variant components of centromeric chromatin.

It is found in the nucleus. Its function is as follows. Component of the chromatin structure remodeling complex (RSC), which is involved in transcription regulation and nucleosome positioning. RSC is responsible for the transfer of a histone octamer from a nucleosome core particle to naked DNA. The reaction requires ATP and involves an activated RSC-nucleosome intermediate. Remodeling reaction also involves DNA translocation, DNA twist and conformational change. As a reconfigurer of centromeric and flanking nucleosomes, RSC complex is required both for proper kinetochore function in chromosome segregation and, via a PKC1-dependent signaling pathway, for organization of the cellular cytoskeleton. This subunit is involved in meiotic sporulation through regulating IME2 expression. This Saccharomyces cerevisiae (strain ATCC 204508 / S288c) (Baker's yeast) protein is Chromatin structure-remodeling complex subunit RSC1 (RSC1).